Here is a 272-residue protein sequence, read N- to C-terminus: UPF0759 protein YecE (272 aa).

This sequence belongs to the UPF0759 family.

The sequence is that of UPF0759 protein YecE (yecE) from Escherichia coli O157:H7.